The sequence spans 112 residues: Mediator of RNA polymerase II transcription subunit 22 (112 aa).

A disordered region spans residues 83-112; sequence KPEDGGEGQLADELLDKIEDTSDGVDKETA. Basic and acidic residues predominate over residues 96-112; that stretch reads LLDKIEDTSDGVDKETA.

The protein belongs to the Mediator complex subunit 22 family. Component of the Mediator complex.

It localises to the nucleus. Its function is as follows. Component of the Mediator complex, a coactivator involved in the regulated transcription of nearly all RNA polymerase II-dependent genes. Mediator functions as a bridge to convey information from gene-specific regulatory proteins to the basal RNA polymerase II transcription machinery. Mediator is recruited to promoters by direct interactions with regulatory proteins and serves as a scaffold for the assembly of a functional preinitiation complex with RNA polymerase II and the general transcription factors. The polypeptide is Mediator of RNA polymerase II transcription subunit 22 (SRB6) (Yarrowia lipolytica (strain CLIB 122 / E 150) (Yeast)).